We begin with the raw amino-acid sequence, 88 residues long: Prolevitide (88 aa).

A signal peptide spans 1–20 (MYKGIFLCVLFAVICANSLA). Pyrrolidone carboxylic acid is present on Q74. Q87 carries the glutamine amide modification.

Belongs to the gastrin/cholecystokinin family. As to expression, expressed by the skin glands.

The protein localises to the secreted. In Xenopus laevis (African clawed frog), this protein is Prolevitide.